A 624-amino-acid polypeptide reads, in one-letter code: ABC transporter G family member 23 (624 aa).

Residues 52-296 (LTVTNLSYTI…IAKLGFQIPE (245 aa)) enclose the ABC transporter domain. Residue 84–91 (GPSGTGKS) coordinates ATP. In terms of domain architecture, ABC transmembrane type-2 spans 350–560 (TEISYLCSRF…PLESMVVNEY (211 aa)). The next 6 helical transmembrane spans lie at 369-389 (LFLARTMQAVVAGLGLGSVYT), 402-422 (LGLFAFSLSFLLSSTVEALPI), 450-470 (IAFVPFLFVVSLLFSIPVYWI), 480-500 (FSFFVLCVWLIILMASSLVLF), 511-531 (GNSLICTVLGAFFLFSGYFIP), and 595-615 (INVGIMLAFFVFYRILCWGIL).

The protein belongs to the ABC transporter superfamily. ABCG family. Eye pigment precursor importer (TC 3.A.1.204) subfamily.

The protein resides in the membrane. The sequence is that of ABC transporter G family member 23 (ABCG23) from Arabidopsis thaliana (Mouse-ear cress).